Consider the following 378-residue polypeptide: Alcohol dehydrogenase 1 (378 aa).

A Zn(2+)-binding site is contributed by cysteine 48. Residue 49–53 coordinates NAD(+); it reads HTDVL. Residues histidine 69, cysteine 99, cysteine 102, cysteine 105, cysteine 113, and cysteine 177 each contribute to the Zn(2+) site. NAD(+) is bound by residues 202-207, aspartate 226, lysine 231, 274-276, 297-299, and 321-323; these read GIGTVG, TGV, IGA, and TAF.

Belongs to the zinc-containing alcohol dehydrogenase family. Class-IV subfamily. Homodimer. It depends on Zn(2+) as a cofactor. Present in non-glandular trichome cells.

The protein resides in the nucleus. It is found in the cytoplasm. It localises to the cytosol. It catalyses the reaction (+)-artemisinic alcohol + NAD(+) = (+)-artemisinic aldehyde + NADH + H(+). The protein operates within sesquiterpene biosynthesis. Functionally, involved in the biosynthesis of the antimalarial endoperoxide artemisinin. Catalyzes the conversion of artemisinic alcohol into artemisinic aldehyde. The polypeptide is Alcohol dehydrogenase 1 (Artemisia annua (Sweet wormwood)).